Reading from the N-terminus, the 351-residue chain is Spindolin (351 aa).

The first 20 residues, 1-20 (MNKFYYICIYINILYVCVSG), serve as a signal peptide directing secretion.

In terms of assembly, homodimer; disulfide-linked.

In terms of biological role, this protein is a spindle body protein. This is Spindolin from Lepidoptera (butterflies and moths).